A 521-amino-acid chain; its full sequence is Probable methylmalonate-semialdehyde/malonate-semialdehyde dehydrogenase [acylating], mitochondrial (521 aa).

Residues Ala-170, Phe-172, Lys-196, Glu-199, Arg-200, and Ser-249 each contribute to the NAD(+) site. Cys-304 serves as the catalytic Nucleophile. Glu-404 provides a ligand contact to NAD(+).

Belongs to the aldehyde dehydrogenase family. As to quaternary structure, homotetramer.

It localises to the mitochondrion. The catalysed reaction is 2-methyl-3-oxopropanoate + NAD(+) + CoA + H2O = propanoyl-CoA + hydrogencarbonate + NADH + H(+). It carries out the reaction 3-oxopropanoate + NAD(+) + CoA + H2O = hydrogencarbonate + acetyl-CoA + NADH + H(+). Its function is as follows. Probable malonate and methylmalonate semialdehyde dehydrogenase involved in the catabolism of valine, thymine, and compounds catabolized by way of beta-alanine, including uracil and cytidine. The protein is Probable methylmalonate-semialdehyde/malonate-semialdehyde dehydrogenase [acylating], mitochondrial of Anopheles gambiae (African malaria mosquito).